The sequence spans 225 residues: RNA-binding protein 24-A (225 aa).

Residues 11 to 88 (TKIFVGGLPY…RKANVNLAYL (78 aa)) form the RRM domain.

The protein resides in the nucleus. It is found in the cytoplasm. Functionally, multifunctional RNA-binding protein involved in the regulation of pre-mRNA splicing, mRNA stability and mRNA translation important for cell fate decision and differentiation. Plays a major role in pre-mRNA alternative splicing regulation. Mediates preferentially muscle-specific exon inclusion in numerous mRNAs important for striated cardiac and skeletal muscle cell differentiation. Binds to intronic splicing enhancer (ISE) composed of stretches of GU-rich motifs localized in flanking intron of exon that will be included by alternative splicing. Involved in embryonic stem cell (ESC) transition to cardiac cell differentiation by promoting pre-mRNA alternative splicing events of several pluripotency and/or differentiation genes. Plays a role in the regulation of mRNA stability and mRNA translation to which it is bound. Involved in myogenic differentiation by regulating myog levels. Binds to a huge amount of mRNAs. Required for embryonic heart development, sarcomer and M-band formation in striated muscles. In Xenopus laevis (African clawed frog), this protein is RNA-binding protein 24-A (rbm24-a).